Consider the following 215-residue polypeptide: 3-isopropylmalate dehydratase small subunit (215 aa).

This sequence belongs to the LeuD family. LeuD type 1 subfamily. In terms of assembly, heterodimer of LeuC and LeuD.

The catalysed reaction is (2R,3S)-3-isopropylmalate = (2S)-2-isopropylmalate. It participates in amino-acid biosynthesis; L-leucine biosynthesis; L-leucine from 3-methyl-2-oxobutanoate: step 2/4. In terms of biological role, catalyzes the isomerization between 2-isopropylmalate and 3-isopropylmalate, via the formation of 2-isopropylmaleate. The polypeptide is 3-isopropylmalate dehydratase small subunit (Hahella chejuensis (strain KCTC 2396)).